Here is a 316-residue protein sequence, read N- to C-terminus: UPF0725 protein At1g02770 (316 aa).

This sequence belongs to the UPF0725 (EMB2204) family.

In Arabidopsis thaliana (Mouse-ear cress), this protein is UPF0725 protein At1g02770.